The chain runs to 181 residues: Protein Syd (181 aa).

The protein belongs to the Syd family.

The protein localises to the cell inner membrane. In terms of biological role, interacts with the SecY protein in vivo. May bind preferentially to an uncomplexed state of SecY, thus functioning either as a chelating agent for excess SecY in the cell or as a regulatory factor that negatively controls the translocase function. The polypeptide is Protein Syd (Salmonella arizonae (strain ATCC BAA-731 / CDC346-86 / RSK2980)).